The primary structure comprises 89 residues: Small ribosomal subunit protein uS15 (89 aa).

The tract at residues 1–25 is disordered; sequence MSLSAEQKGEIVKKHARTASDTGSP.

Belongs to the universal ribosomal protein uS15 family. As to quaternary structure, part of the 30S ribosomal subunit. Forms a bridge to the 50S subunit in the 70S ribosome, contacting the 23S rRNA.

Functionally, one of the primary rRNA binding proteins, it binds directly to 16S rRNA where it helps nucleate assembly of the platform of the 30S subunit by binding and bridging several RNA helices of the 16S rRNA. In terms of biological role, forms an intersubunit bridge (bridge B4) with the 23S rRNA of the 50S subunit in the ribosome. In Alkalilimnicola ehrlichii (strain ATCC BAA-1101 / DSM 17681 / MLHE-1), this protein is Small ribosomal subunit protein uS15.